A 798-amino-acid polypeptide reads, in one-letter code: Protocadherin beta-13 (798 aa).

The first 28 residues, methionine 1–alanine 28, serve as a signal peptide directing secretion. Over alanine 29–leucine 690 the chain is Extracellular. Cadherin domains are found at residues valine 36–phenylalanine 134, methionine 139–phenylalanine 243, tyrosine 248–valine 348, phenylalanine 353–phenylalanine 451, and tyrosine 456–valine 561. Asparagine 418 and asparagine 436 each carry an N-linked (GlcNAc...) asparagine glycan. Asparagine 567 is a glycosylation site (N-linked (GlcNAc...) asparagine). The 104-residue stretch at glycine 568–leucine 671 folds into the Cadherin 6 domain. The chain crosses the membrane as a helical span at residues valine 691–valine 711. The Cytoplasmic segment spans residues arginine 712 to glutamine 798.

It is found in the cell membrane. In terms of biological role, potential calcium-dependent cell-adhesion protein. May be involved in the establishment and maintenance of specific neuronal connections in the brain. The polypeptide is Protocadherin beta-13 (PCDHB13) (Homo sapiens (Human)).